A 302-amino-acid chain; its full sequence is Nucleotide-binding protein BceJ2315_08000 (302 aa).

An ATP-binding site is contributed by 8–15; that stretch reads GISGSGKS. 57 to 60 is a GTP binding site; sequence DARS.

It belongs to the RapZ-like family.

Functionally, displays ATPase and GTPase activities. This chain is Nucleotide-binding protein BceJ2315_08000, found in Burkholderia cenocepacia (strain ATCC BAA-245 / DSM 16553 / LMG 16656 / NCTC 13227 / J2315 / CF5610) (Burkholderia cepacia (strain J2315)).